Consider the following 313-residue polypeptide: Ribosomal RNA small subunit methyltransferase H (313 aa).

Residues 35-37, D55, F79, D101, and Q108 each bind S-adenosyl-L-methionine; that span reads GGH.

The protein belongs to the methyltransferase superfamily. RsmH family.

It is found in the cytoplasm. The enzyme catalyses cytidine(1402) in 16S rRNA + S-adenosyl-L-methionine = N(4)-methylcytidine(1402) in 16S rRNA + S-adenosyl-L-homocysteine + H(+). Functionally, specifically methylates the N4 position of cytidine in position 1402 (C1402) of 16S rRNA. This is Ribosomal RNA small subunit methyltransferase H from Salmonella paratyphi A (strain ATCC 9150 / SARB42).